Consider the following 232-residue polypeptide: Ribose-5-phosphate isomerase A (232 aa).

Residues 28–31 (TGST), 83–86 (DGAD), and 96–99 (KGGG) each bind substrate. The Proton acceptor role is filled by Glu-105. Lys-123 serves as a coordination point for substrate.

Belongs to the ribose 5-phosphate isomerase family. Homodimer.

It catalyses the reaction aldehydo-D-ribose 5-phosphate = D-ribulose 5-phosphate. Its pathway is carbohydrate degradation; pentose phosphate pathway; D-ribose 5-phosphate from D-ribulose 5-phosphate (non-oxidative stage): step 1/1. Its function is as follows. Catalyzes the reversible conversion of ribose-5-phosphate to ribulose 5-phosphate. In Rhizobium etli (strain CIAT 652), this protein is Ribose-5-phosphate isomerase A.